We begin with the raw amino-acid sequence, 494 residues long: 3-octaprenyl-4-hydroxybenzoate carboxy-lyase (494 aa).

Position 172 (N172) interacts with Mn(2+). Prenylated FMN-binding positions include 175 to 177, 189 to 191, and 194 to 195; these read IYR, RWL, and RG. E238 lines the Mn(2+) pocket. The active-site Proton donor is D287.

This sequence belongs to the UbiD family. Homohexamer. The cofactor is prenylated FMN. Mn(2+) serves as cofactor.

Its subcellular location is the cell membrane. It catalyses the reaction a 4-hydroxy-3-(all-trans-polyprenyl)benzoate + H(+) = a 2-(all-trans-polyprenyl)phenol + CO2. It functions in the pathway cofactor biosynthesis; ubiquinone biosynthesis. In terms of biological role, catalyzes the decarboxylation of 3-octaprenyl-4-hydroxy benzoate to 2-octaprenylphenol, an intermediate step in ubiquinone biosynthesis. The sequence is that of 3-octaprenyl-4-hydroxybenzoate carboxy-lyase from Cronobacter sakazakii (strain ATCC BAA-894) (Enterobacter sakazakii).